The following is a 148-amino-acid chain: Large-conductance mechanosensitive channel (148 aa).

2 helical membrane passes run 9–29 and 79–99; these read AFAV…GAAF and IQTV…VKAI.

The protein belongs to the MscL family. As to quaternary structure, homopentamer.

It localises to the cell inner membrane. Its function is as follows. Channel that opens in response to stretch forces in the membrane lipid bilayer. May participate in the regulation of osmotic pressure changes within the cell. This is Large-conductance mechanosensitive channel from Pseudomonas savastanoi pv. phaseolicola (strain 1448A / Race 6) (Pseudomonas syringae pv. phaseolicola (strain 1448A / Race 6)).